Reading from the N-terminus, the 413-residue chain is MKVYLVGGAVRDQLLGREVRERDWVVVGARPEDLKQRGYRPVGQDFPVFLHPETHEEYALARTERKTGRGYHGFAFHASPEVTLEQDLARRDLTINAMARADDGTLIDPYDGRRDLEQRLLRHVSPAFAEDPVRILRLARFAARFQPLGFRVAPETLALCRKMVADGEVDALVPERVWQELSRALLEDTPVPFFRVLRECGALARVLPELDRLFGIPEPEAYHPEGDTGEHTLLALAQSARLGGDLPVRWAVLLHDLGKATTPSQVWPRHPAHEHRGVPLVEALCERLRAPRECRDLARLVCRYHLQAHRAFELRASTLLKLLEGLDLFRRQARLEPFLLACEADARGRLGLEDQPYPQARFLREAYRVAAAVTARPFVQAGFKGRQIAEAVTRERIRALAALQRDYPRPEAH.

Positions 8 and 11 each coordinate ATP. CTP is bound by residues Gly-8 and Arg-11. Residues Glu-21 and Asp-23 each contribute to the Mg(2+) site. Residues Arg-91, Arg-137, and Arg-140 each coordinate ATP. CTP-binding residues include Arg-91, Arg-137, and Arg-140. An HD domain is found at 228–329 (TGEHTLLALA…LKLLEGLDLF (102 aa)).

This sequence belongs to the tRNA nucleotidyltransferase/poly(A) polymerase family. Bacterial CCA-adding enzyme type 1 subfamily. In terms of assembly, monomer. Can also form homodimers and oligomers. Mg(2+) is required as a cofactor. Ni(2+) serves as cofactor.

It carries out the reaction a tRNA precursor + 2 CTP + ATP = a tRNA with a 3' CCA end + 3 diphosphate. The catalysed reaction is a tRNA with a 3' CCA end + 2 CTP + ATP = a tRNA with a 3' CCACCA end + 3 diphosphate. In terms of biological role, catalyzes the addition and repair of the essential 3'-terminal CCA sequence in tRNAs without using a nucleic acid template. Adds these three nucleotides in the order of C, C, and A to the tRNA nucleotide-73, using CTP and ATP as substrates and producing inorganic pyrophosphate. tRNA 3'-terminal CCA addition is required both for tRNA processing and repair. Also involved in tRNA surveillance by mediating tandem CCA addition to generate a CCACCA at the 3' terminus of unstable tRNAs. While stable tRNAs receive only 3'-terminal CCA, unstable tRNAs are marked with CCACCA and rapidly degraded. This is Multifunctional CCA protein from Alkalilimnicola ehrlichii (strain ATCC BAA-1101 / DSM 17681 / MLHE-1).